The primary structure comprises 361 residues: Chorismate synthase (361 aa).

Residues Arg48 and Arg54 each coordinate NADP(+). Residues 125-127 (RSS), 238-239 (NA), Gly278, 293-297 (KPTSS), and Arg319 contribute to the FMN site.

Belongs to the chorismate synthase family. Homotetramer. FMNH2 serves as cofactor.

It carries out the reaction 5-O-(1-carboxyvinyl)-3-phosphoshikimate = chorismate + phosphate. It functions in the pathway metabolic intermediate biosynthesis; chorismate biosynthesis; chorismate from D-erythrose 4-phosphate and phosphoenolpyruvate: step 7/7. Catalyzes the anti-1,4-elimination of the C-3 phosphate and the C-6 proR hydrogen from 5-enolpyruvylshikimate-3-phosphate (EPSP) to yield chorismate, which is the branch point compound that serves as the starting substrate for the three terminal pathways of aromatic amino acid biosynthesis. This reaction introduces a second double bond into the aromatic ring system. This Pectobacterium atrosepticum (strain SCRI 1043 / ATCC BAA-672) (Erwinia carotovora subsp. atroseptica) protein is Chorismate synthase.